The chain runs to 161 residues: Nucleotide-binding protein Sama_2557 (161 aa).

The protein belongs to the YajQ family.

Functionally, nucleotide-binding protein. In Shewanella amazonensis (strain ATCC BAA-1098 / SB2B), this protein is Nucleotide-binding protein Sama_2557.